A 463-amino-acid chain; its full sequence is Calcitonin gene-related peptide type 1 receptor (463 aa).

Residues 1–22 (MDKKHILCFLVLLPLNMALISA) form the signal peptide. Over 23–138 (ESEEGVNQTD…STHEKVKTAL (116 aa)) the chain is Extracellular. Residues Asn-29, Asn-65, Asn-117, Asn-122, Asn-127, and Asn-128 are each glycosylated (N-linked (GlcNAc...) asparagine). Intrachain disulfides connect Cys-47/Cys-73, Cys-64/Cys-104, and Cys-87/Cys-126. A helical transmembrane segment spans residues 139–163 (NLFYLTIIGHGLSIASLIISLIIFF). The Cytoplasmic segment spans residues 164-174 (YFKSLSCQRIT). Residues 175-197 (LHKNLFFSFICNSIVTIIHLTAV) traverse the membrane as a helical segment. Residues 198 to 208 (ANNQALVATNP) are Extracellular-facing. Residues 209 to 237 (VSCKVSQFIHLYLMGCNYFWMLCEGVYLH) form a helical membrane-spanning segment. Topologically, residues 238-251 (TLIVVAVFAEKQHL) are cytoplasmic. A helical membrane pass occupies residues 252-272 (MWYYFLGWGFPLLPACIHAIA). The Extracellular segment spans residues 273 to 288 (RSLYYNDNCWISSDTH). The tract at residues 287 to 288 (TH) is required for RAMP3 interaction. A helical transmembrane segment spans residues 289–313 (LLYIIHGPICAALLVNLFFLLNIVR). The Cytoplasmic portion of the chain corresponds to 314-328 (VLITKLKVTHQVESN). Residues 329–350 (LYMKAVRATLILVPLLGIEFVL) form a helical membrane-spanning segment. Residues 351–365 (FPWRPEGKVAEEVYD) are Extracellular-facing. The helical transmembrane segment at 366–386 (YVMHILMHFQGLLVATIFCFF) threads the bilayer. Residues 387–463 (NGEVQAILRR…KSENMYDLVM (77 aa)) lie on the Cytoplasmic side of the membrane. Phosphoserine occurs at positions 419 and 444.

It belongs to the G-protein coupled receptor 2 family. Heterodimer of CALCRL and RAMP1; the receptor complex functions as CGRP receptor. Heterodimer of CALCRL and RAMP2 or CALCRL and RAMP3; the complexes function as adrenomedullin receptor. Expressed predominantly in the lung, thymus, heart and brain.

The protein localises to the cell membrane. Functionally, g protein-coupled receptor which specificity is determined by its interaction with receptor-activity-modifying proteins (RAMPs). Together with RAMP1, form the receptor complex for calcitonin-gene-related peptides CALCA/CGRP1 and CALCB/CGRP2. Together with RAMP2 or RAMP3, function as receptor complexes for adrenomedullin (ADM and ADM2). Ligand binding causes a conformation change that triggers signaling via guanine nucleotide-binding proteins (G proteins) and modulates the activity of downstream effectors. Activates cAMP-dependent pathway. The sequence is that of Calcitonin gene-related peptide type 1 receptor from Mus musculus (Mouse).